Reading from the N-terminus, the 121-residue chain is Large ribosomal subunit protein bL12 (121 aa).

It belongs to the bacterial ribosomal protein bL12 family. As to quaternary structure, homodimer. Part of the ribosomal stalk of the 50S ribosomal subunit. Forms a multimeric L10(L12)X complex, where L10 forms an elongated spine to which 2 to 4 L12 dimers bind in a sequential fashion. Binds GTP-bound translation factors.

Functionally, forms part of the ribosomal stalk which helps the ribosome interact with GTP-bound translation factors. Is thus essential for accurate translation. In Leuconostoc mesenteroides subsp. mesenteroides (strain ATCC 8293 / DSM 20343 / BCRC 11652 / CCM 1803 / JCM 6124 / NCDO 523 / NBRC 100496 / NCIMB 8023 / NCTC 12954 / NRRL B-1118 / 37Y), this protein is Large ribosomal subunit protein bL12.